A 329-amino-acid polypeptide reads, in one-letter code: 7,8-didemethyl-8-hydroxy-5-deazariboflavin synthase (329 aa).

The Radical SAM core domain occupies 6–244 (ITYTKNVFLP…EEISIQVAPN (239 aa)). [4Fe-4S] cluster contacts are provided by cysteine 20, cysteine 24, and cysteine 27.

Belongs to the radical SAM superfamily. CofG family. In terms of assembly, consists of two subunits, CofG and CofH. [4Fe-4S] cluster is required as a cofactor.

The enzyme catalyses 5-amino-5-(4-hydroxybenzyl)-6-(D-ribitylimino)-5,6-dihydrouracil + S-adenosyl-L-methionine = 7,8-didemethyl-8-hydroxy-5-deazariboflavin + 5'-deoxyadenosine + L-methionine + NH4(+) + H(+). It participates in cofactor biosynthesis; coenzyme F0 biosynthesis. Its function is as follows. Catalyzes the radical-mediated synthesis of 7,8-didemethyl-8-hydroxy-5-deazariboflavin from 5-amino-5-(4-hydroxybenzyl)-6-(D-ribitylimino)-5,6-dihydrouracil. This chain is 7,8-didemethyl-8-hydroxy-5-deazariboflavin synthase, found in Methanoregula boonei (strain DSM 21154 / JCM 14090 / 6A8).